The following is a 479-amino-acid chain: 3-phytase B (479 aa).

Positions 1–19 are cleaved as a signal peptide; the sequence is MPRTSLLTLACALATGASA. The active-site Nucleophile is His-82. Asn-106, Asn-191, Asn-227, Asn-250, and Asn-315 each carry an N-linked (GlcNAc...) asparagine glycan. Asp-338 serves as the catalytic Proton donor. Asn-425, Asn-442, and Asn-458 each carry an N-linked (GlcNAc...) asparagine glycan.

Belongs to the histidine acid phosphatase family.

The catalysed reaction is 1D-myo-inositol hexakisphosphate + H2O = 1D-myo-inositol 1,2,4,5,6-pentakisphosphate + phosphate. In terms of biological role, catalyzes the hydrolysis of inorganic orthophosphate from phytate. This Aspergillus niger protein is 3-phytase B (phyB).